The following is an 829-amino-acid chain: Ectonucleotide pyrophosphatase/phosphodiesterase C27A7.1 (829 aa).

Residues 54-74 (VIGIAVLLLAMVVIVVIVLLL) traverse the membrane as a helical; Signal-anchor for type II membrane protein segment. T224 serves as the catalytic Nucleophile. N296, N424, N514, N542, N582, N649, N733, and N748 each carry an N-linked (GlcNAc...) asparagine glycan. A disulfide bridge links C439 with C782.

This sequence belongs to the nucleotide pyrophosphatase/phosphodiesterase family.

It localises to the membrane. Its function is as follows. Probable phosphodiesterase. This Caenorhabditis elegans protein is Ectonucleotide pyrophosphatase/phosphodiesterase C27A7.1.